The primary structure comprises 466 residues: MDQSSRYVNLALKEEDLIAGGEHVLCAYIMKPKAGYGYVATAAHFAAESSTGTNVEVCTTDDFTRGVDALVYEVDEARELTKIAYPVALFDRNITDGKAMIASFLTLTMGNNQGMGDVEYAKMHDFYVPEAYRALFDGPSVNISALWKVLGRPEVDGGLVVGTIIKPKLGLRPKPFAEACHAFWLGGDFIKNDEPQGNQPFAPLRDTIALVADAMRRAQDETGEAKLFSANITADDPFEIIARGEYVLETFGENASHVALLVDGYVAGAAAITTARRRFPDNFLHYHRAGHGAVTSPQSKRGYTAFVHCKMARLQGASGIHTGTMGFGKMEGESSDRAIAYMLTQDEAQGPFYRQSWGGMKACTPIISGGMNALRMPGFFENLGNANVILTAGGGAFGHIDGPVAGARSLRQAWQAWRDGVPVLDYAREHKELARAFESFPGDADQIYPGWRKALGVEDTRSALPA.

Asn111 provides a ligand contact to substrate. The Proton acceptor role is filled by Lys166. Residue Lys168 coordinates substrate. Mg(2+)-binding residues include Lys191, Asp193, and Glu194. Residue Lys191 is modified to N6-carboxylysine. The active-site Proton acceptor is the His287. 3 residues coordinate substrate: Arg288, His321, and Ser368.

This sequence belongs to the RuBisCO large chain family. Type II subfamily. As to quaternary structure, homodimer. Requires Mg(2+) as cofactor.

It catalyses the reaction 2 (2R)-3-phosphoglycerate + 2 H(+) = D-ribulose 1,5-bisphosphate + CO2 + H2O. It carries out the reaction D-ribulose 1,5-bisphosphate + O2 = 2-phosphoglycolate + (2R)-3-phosphoglycerate + 2 H(+). Its function is as follows. RuBisCO catalyzes two reactions: the carboxylation of D-ribulose 1,5-bisphosphate, the primary event in carbon dioxide fixation, as well as the oxidative fragmentation of the pentose substrate. Both reactions occur simultaneously and in competition at the same active site. This Rhodospirillum rubrum (strain ATCC 11170 / ATH 1.1.1 / DSM 467 / LMG 4362 / NCIMB 8255 / S1) protein is Ribulose bisphosphate carboxylase.